A 201-amino-acid chain; its full sequence is MLNAKIGKVGKVLVCGMKGVGKTALIEQLVYGHVNPETELHPTIEDIYVASVDTGRGGARETLRIYDTAGLQGEQQQLPRHYLQFPDAFVLVYDPMDPRSLDMLADIKADIEKHKEKKEIPVVVLANVRARAAPNPVEKVMDRANIWCQRERIKHYTVNAMERPSLYEPFTTLCARLHPMQTKSTFPQLRQVMQNRQKSEA.

The interval 3–201 is small GTPase-like; sequence NAKIGKVGKV…VMQNRQKSEA (199 aa). 16–23 contributes to the GTP binding site; it reads GMKGVGKT. An Effector region motif is present at residues 40 to 48; sequence LHPTIEDIY. Residues 67–71 and 127–130 each bind GTP; these read DTAGL and NVRA.

This sequence belongs to the small GTPase superfamily. Ras family. KappaB-Ras subfamily. In terms of assembly, interacts with NF-kappa-B inhibitor cactus.

In terms of biological role, atypical Ras-like protein that may act as a regulator of NF-kappa-B activity, possibly by preventing the degradation of NF-kappa-B inhibitor cactus. This Drosophila melanogaster (Fruit fly) protein is NF-kappa-B inhibitor-interacting Ras-like protein (kappaB-Ras).